The sequence spans 599 residues: Proline--tRNA ligase (599 aa).

It belongs to the class-II aminoacyl-tRNA synthetase family. ProS type 1 subfamily. As to quaternary structure, homodimer.

The protein localises to the cytoplasm. The catalysed reaction is tRNA(Pro) + L-proline + ATP = L-prolyl-tRNA(Pro) + AMP + diphosphate. Its function is as follows. Catalyzes the attachment of proline to tRNA(Pro) in a two-step reaction: proline is first activated by ATP to form Pro-AMP and then transferred to the acceptor end of tRNA(Pro). As ProRS can inadvertently accommodate and process non-cognate amino acids such as alanine and cysteine, to avoid such errors it has two additional distinct editing activities against alanine. One activity is designated as 'pretransfer' editing and involves the tRNA(Pro)-independent hydrolysis of activated Ala-AMP. The other activity is designated 'posttransfer' editing and involves deacylation of mischarged Ala-tRNA(Pro). The misacylated Cys-tRNA(Pro) is not edited by ProRS. The sequence is that of Proline--tRNA ligase from Prochlorococcus marinus (strain MIT 9303).